Reading from the N-terminus, the 387-residue chain is Ferrochelatase (387 aa).

Fe cation contacts are provided by H196 and E277.

This sequence belongs to the ferrochelatase family.

The protein resides in the cytoplasm. It carries out the reaction heme b + 2 H(+) = protoporphyrin IX + Fe(2+). It participates in porphyrin-containing compound metabolism; protoheme biosynthesis; protoheme from protoporphyrin-IX: step 1/1. In terms of biological role, catalyzes the ferrous insertion into protoporphyrin IX. The chain is Ferrochelatase from Rippkaea orientalis (strain PCC 8801 / RF-1) (Cyanothece sp. (strain PCC 8801)).